Reading from the N-terminus, the 21-residue chain is Hemocyanin subunit 1 (21 aa).

It belongs to the tyrosinase family. Hemocyanin subfamily. Hemolymph.

It localises to the secreted. The protein resides in the extracellular space. Functionally, hemocyanins are copper-containing oxygen carriers occurring freely dissolved in the hemolymph of many mollusks and arthropods. The polypeptide is Hemocyanin subunit 1 (Maja squinado (Mediterranean spider crab)).